Here is a 345-residue protein sequence, read N- to C-terminus: Phosphate acyltransferase (345 aa).

Belongs to the PlsX family. In terms of assembly, homodimer. Probably interacts with PlsY.

The protein resides in the cytoplasm. It carries out the reaction a fatty acyl-[ACP] + phosphate = an acyl phosphate + holo-[ACP]. It functions in the pathway lipid metabolism; phospholipid metabolism. Its function is as follows. Catalyzes the reversible formation of acyl-phosphate (acyl-PO(4)) from acyl-[acyl-carrier-protein] (acyl-ACP). This enzyme utilizes acyl-ACP as fatty acyl donor, but not acyl-CoA. This chain is Phosphate acyltransferase, found in Thermodesulfovibrio yellowstonii (strain ATCC 51303 / DSM 11347 / YP87).